The primary structure comprises 431 residues: Large envelope protein (431 aa).

Gly2 carries N-myristoyl glycine; by host lipidation. A pre-S1 region spans residues Gly2–Leu148. Residues Gly2–Ser207 are pre-S. Residues Gly2–Ser214 lie on the Virion surface; in external conformation side of the membrane. The Intravirion; in internal conformation segment spans residues Gly2 to Arg286. A glycan (N-linked (GlcNAc...) asparagine) is linked at Asn3. Residues Ile115–His147 form a disordered region. Residues Thr149 to Ser207 are pre-S2. The helical transmembrane segment at Leu215–Ile235 threads the bilayer. At Ala236 to Arg286 the chain is on the intravirion; in external conformation side. A helical membrane pass occupies residues Phe287–Trp307. Residues Lys308 to Asn379 lie on the Virion surface side of the membrane. Asn351 carries an N-linked (GlcNAc...) asparagine; by host glycan. Residues Leu380–Ile400 form a helical membrane-spanning segment. Over Trp401–Trp406 the chain is Intravirion. The helical transmembrane segment at Gly407–Val429 threads the bilayer. Residues Tyr430–Ile431 lie on the Virion surface side of the membrane.

Belongs to the orthohepadnavirus major surface antigen family. As to quaternary structure, in its internal form (Li-HBsAg), interacts with the capsid protein and with the isoform S. Interacts with host chaperone CANX. Associates with host chaperone CANX through its pre-S2 N glycan; this association may be essential for isoform M proper secretion. In terms of assembly, interacts with isoform L. Interacts with the antigens of satellite virus HDV (HDVAgs); this interaction is required for encapsidation of HDV genomic RNA. In terms of processing, isoform M is N-terminally acetylated by host at a ratio of 90%, and N-glycosylated by host at the pre-S2 region. Myristoylated.

Its subcellular location is the virion membrane. Functionally, the large envelope protein exists in two topological conformations, one which is termed 'external' or Le-HBsAg and the other 'internal' or Li-HBsAg. In its external conformation the protein attaches the virus to cell receptors and thereby initiating infection. This interaction determines the species specificity and liver tropism. This attachment induces virion internalization predominantly through caveolin-mediated endocytosis. The large envelope protein also assures fusion between virion membrane and endosomal membrane. In its internal conformation the protein plays a role in virion morphogenesis and mediates the contact with the nucleocapsid like a matrix protein. Its function is as follows. The middle envelope protein plays an important role in the budding of the virion. It is involved in the induction of budding in a nucleocapsid independent way. In this process the majority of envelope proteins bud to form subviral lipoprotein particles of 22 nm of diameter that do not contain a nucleocapsid. This chain is Large envelope protein, found in Marmota monax (Woodchuck).